Consider the following 191-residue polypeptide: UPF0312 protein PSPA7_0523 (191 aa).

Residues 1–23 (MLKKTLAALALGSALFTAGQAMA) form the signal peptide.

This sequence belongs to the UPF0312 family. Type 1 subfamily.

The protein localises to the periplasm. This Pseudomonas paraeruginosa (strain DSM 24068 / PA7) (Pseudomonas aeruginosa (strain PA7)) protein is UPF0312 protein PSPA7_0523.